The sequence spans 92 residues: Small ribosomal subunit protein uS19c (92 aa).

This sequence belongs to the universal ribosomal protein uS19 family.

It is found in the plastid. The protein localises to the chloroplast. In terms of biological role, protein S19 forms a complex with S13 that binds strongly to the 16S ribosomal RNA. This Anthoceros angustus (Hornwort) protein is Small ribosomal subunit protein uS19c (rps19).